Here is a 229-residue protein sequence, read N- to C-terminus: Uracil-DNA glycosylase (229 aa).

Residue Asp-64 is the Proton acceptor of the active site.

This sequence belongs to the uracil-DNA glycosylase (UDG) superfamily. UNG family. In terms of assembly, monomer.

The protein resides in the cytoplasm. It carries out the reaction Hydrolyzes single-stranded DNA or mismatched double-stranded DNA and polynucleotides, releasing free uracil.. In terms of biological role, excises uracil residues from the DNA which can arise as a result of misincorporation of dUMP residues by DNA polymerase or due to deamination of cytosine. The polypeptide is Uracil-DNA glycosylase (Escherichia coli O157:H7).